Consider the following 258-residue polypeptide: Deoxyribose-phosphate aldolase (258 aa).

Asp-102 serves as the catalytic Proton donor/acceptor. Lys-165 functions as the Schiff-base intermediate with acetaldehyde in the catalytic mechanism. Lys-199 acts as the Proton donor/acceptor in catalysis.

It belongs to the DeoC/FbaB aldolase family. DeoC type 2 subfamily.

The protein localises to the cytoplasm. It catalyses the reaction 2-deoxy-D-ribose 5-phosphate = D-glyceraldehyde 3-phosphate + acetaldehyde. Its pathway is carbohydrate degradation; 2-deoxy-D-ribose 1-phosphate degradation; D-glyceraldehyde 3-phosphate and acetaldehyde from 2-deoxy-alpha-D-ribose 1-phosphate: step 2/2. Catalyzes a reversible aldol reaction between acetaldehyde and D-glyceraldehyde 3-phosphate to generate 2-deoxy-D-ribose 5-phosphate. This is Deoxyribose-phosphate aldolase from Aliivibrio fischeri (strain MJ11) (Vibrio fischeri).